Here is a 372-residue protein sequence, read N- to C-terminus: NAD(P)H-quinone oxidoreductase subunit 1 (372 aa).

8 helical membrane-spanning segments follow: residues 27 to 47 (IIWL…GVLV), 97 to 117 (ILFT…WLIV), 128 to 148 (VGIG…GLLM), 176 to 196 (LALS…IDIV), 204 to 224 (ILSW…ICAL), 266 to 286 (ILSA…PIPV), 308 to 328 (SIGI…AILL), and 347 to 367 (FLLP…LAFP).

This sequence belongs to the complex I subunit 1 family. In terms of assembly, NDH-1 is composed of at least 11 different subunits.

Its subcellular location is the cellular thylakoid membrane. The enzyme catalyses a plastoquinone + NADH + (n+1) H(+)(in) = a plastoquinol + NAD(+) + n H(+)(out). It catalyses the reaction a plastoquinone + NADPH + (n+1) H(+)(in) = a plastoquinol + NADP(+) + n H(+)(out). Functionally, NDH-1 shuttles electrons from an unknown electron donor, via FMN and iron-sulfur (Fe-S) centers, to quinones in the respiratory and/or the photosynthetic chain. The immediate electron acceptor for the enzyme in this species is believed to be plastoquinone. Couples the redox reaction to proton translocation, and thus conserves the redox energy in a proton gradient. This chain is NAD(P)H-quinone oxidoreductase subunit 1, found in Prochlorococcus marinus (strain MIT 9215).